A 494-amino-acid polypeptide reads, in one-letter code: Sugar phosphate exchanger 3 (494 aa).

Residues 10–30 form a helical membrane-spanning segment; the sequence is GALLTSFSHHHLAVFLLTFFS. Asn-58 carries N-linked (GlcNAc...) asparagine glycosylation. The next 5 helical transmembrane spans lie at 81–101, 113–133, 146–166, 177–197, and 209–229; these read TLFLGTLDTVFLFSYAVGLFI, WVLSFGMCSSAFVVFVFGTLT, GLWIVNGLLQSTGWPCVVAVM, VVFGLWSACASVGNILGAFLA, and FLVTASVQFAGGIIIFFGLLV. The segment at 240–261 is disordered; it reads GAEESSEEDSQRPLIDGAENED. The next 6 membrane-spanning stretches (helical) occupy residues 297 to 317, 333 to 353, 357 to 377, 386 to 406, 428 to 448, and 457 to 477; these read LAYACLKLVNYSFFFWLPFYL, IWYDVGGIIGGTLLGFISDVL, APVLALSLFLAVWSLVGYSRS, LLMTITGFFIGGPSNMVSSAI, GIVDGTGSIGAAVGQYLVSLI, and VFYFFILMTSCTILFILPLIV.

It belongs to the major facilitator superfamily. Organophosphate:Pi antiporter (OPA) (TC 2.A.1.4) family. In terms of assembly, interacts with ATRAID; the interaction is direct and both proteins are mutually dependent for their stability. Post-translationally, glycosylated.

It localises to the endoplasmic reticulum membrane. The protein resides in the lysosome membrane. Functionally, unlike the other SLC37 members, lacks glucose-6-phosphate antiporter activity. In osteoclasts, forms a transporter complex with ATRAID for nitrogen-containing-bisphophonates (N-BPs) required for releasing N-BP molecules that have trafficked to lysosomes through fluid-phase endocytosis into the cytosol. The chain is Sugar phosphate exchanger 3 (Slc37a3) from Mus musculus (Mouse).